The chain runs to 344 residues: Phosphoribosylformylglycinamidine cyclo-ligase (344 aa).

This sequence belongs to the AIR synthase family.

The protein localises to the cytoplasm. The catalysed reaction is 2-formamido-N(1)-(5-O-phospho-beta-D-ribosyl)acetamidine + ATP = 5-amino-1-(5-phospho-beta-D-ribosyl)imidazole + ADP + phosphate + H(+). It functions in the pathway purine metabolism; IMP biosynthesis via de novo pathway; 5-amino-1-(5-phospho-D-ribosyl)imidazole from N(2)-formyl-N(1)-(5-phospho-D-ribosyl)glycinamide: step 2/2. The chain is Phosphoribosylformylglycinamidine cyclo-ligase from Laribacter hongkongensis (strain HLHK9).